The primary structure comprises 463 residues: Glycogen synthase (463 aa).

Lys-15 is a binding site for ADP-alpha-D-glucose.

The protein belongs to the glycosyltransferase 1 family. Bacterial/plant glycogen synthase subfamily.

The catalysed reaction is [(1-&gt;4)-alpha-D-glucosyl](n) + ADP-alpha-D-glucose = [(1-&gt;4)-alpha-D-glucosyl](n+1) + ADP + H(+). The protein operates within glycan biosynthesis; glycogen biosynthesis. In terms of biological role, synthesizes alpha-1,4-glucan chains using ADP-glucose. This chain is Glycogen synthase, found in Aquifex aeolicus (strain VF5).